The primary structure comprises 411 residues: Multidrug resistance protein MdtA (411 aa).

Residues 1-26 form the signal peptide; the sequence is MNNNKKTKKRFSLIIILLIVIAGAIA. Positions 35–55 are enriched in polar residues; the sequence is SAPPVSKDTPTANTPNRSTAG. Residues 35-64 are disordered; it reads SAPPVSKDTPTANTPNRSTAGSRRPPMPPV.

Belongs to the membrane fusion protein (MFP) (TC 8.A.1) family. Part of a tripartite efflux system composed of MdtA, MdtB and MdtC.

It localises to the cell inner membrane. This is Multidrug resistance protein MdtA from Proteus mirabilis (strain HI4320).